Here is a 97-residue protein sequence, read N- to C-terminus: Aspartyl/glutamyl-tRNA(Asn/Gln) amidotransferase subunit C (97 aa).

The disordered stretch occupies residues 59–78 (STGKLRPDEPAQPLSRDDAL). Basic and acidic residues predominate over residues 63–78 (LRPDEPAQPLSRDDAL).

It belongs to the GatC family. Heterotrimer of A, B and C subunits.

The enzyme catalyses L-glutamyl-tRNA(Gln) + L-glutamine + ATP + H2O = L-glutaminyl-tRNA(Gln) + L-glutamate + ADP + phosphate + H(+). The catalysed reaction is L-aspartyl-tRNA(Asn) + L-glutamine + ATP + H2O = L-asparaginyl-tRNA(Asn) + L-glutamate + ADP + phosphate + 2 H(+). In terms of biological role, allows the formation of correctly charged Asn-tRNA(Asn) or Gln-tRNA(Gln) through the transamidation of misacylated Asp-tRNA(Asn) or Glu-tRNA(Gln) in organisms which lack either or both of asparaginyl-tRNA or glutaminyl-tRNA synthetases. The reaction takes place in the presence of glutamine and ATP through an activated phospho-Asp-tRNA(Asn) or phospho-Glu-tRNA(Gln). This is Aspartyl/glutamyl-tRNA(Asn/Gln) amidotransferase subunit C from Metallosphaera sedula (strain ATCC 51363 / DSM 5348 / JCM 9185 / NBRC 15509 / TH2).